The primary structure comprises 389 residues: UDP-N-acetylglucosamine--N-acetylmuramyl-(pentapeptide) pyrophosphoryl-undecaprenol N-acetylglucosamine transferase (389 aa).

Residues T39–G41, N157, R193, S221, I275, A294–E299, and Q320 each bind UDP-N-acetyl-alpha-D-glucosamine.

Belongs to the glycosyltransferase 28 family. MurG subfamily.

Its subcellular location is the cell inner membrane. It catalyses the reaction di-trans,octa-cis-undecaprenyl diphospho-N-acetyl-alpha-D-muramoyl-L-alanyl-D-glutamyl-meso-2,6-diaminopimeloyl-D-alanyl-D-alanine + UDP-N-acetyl-alpha-D-glucosamine = di-trans,octa-cis-undecaprenyl diphospho-[N-acetyl-alpha-D-glucosaminyl-(1-&gt;4)]-N-acetyl-alpha-D-muramoyl-L-alanyl-D-glutamyl-meso-2,6-diaminopimeloyl-D-alanyl-D-alanine + UDP + H(+). It functions in the pathway cell wall biogenesis; peptidoglycan biosynthesis. Its function is as follows. Cell wall formation. Catalyzes the transfer of a GlcNAc subunit on undecaprenyl-pyrophosphoryl-MurNAc-pentapeptide (lipid intermediate I) to form undecaprenyl-pyrophosphoryl-MurNAc-(pentapeptide)GlcNAc (lipid intermediate II). The polypeptide is UDP-N-acetylglucosamine--N-acetylmuramyl-(pentapeptide) pyrophosphoryl-undecaprenol N-acetylglucosamine transferase (Saccharophagus degradans (strain 2-40 / ATCC 43961 / DSM 17024)).